The sequence spans 281 residues: Probable endonuclease 4 (281 aa).

Residues H69, H109, E145, D179, H182, H216, D229, H231, and E261 each coordinate Zn(2+).

Belongs to the AP endonuclease 2 family. It depends on Zn(2+) as a cofactor.

The catalysed reaction is Endonucleolytic cleavage to 5'-phosphooligonucleotide end-products.. Functionally, endonuclease IV plays a role in DNA repair. It cleaves phosphodiester bonds at apurinic or apyrimidinic (AP) sites, generating a 3'-hydroxyl group and a 5'-terminal sugar phosphate. The chain is Probable endonuclease 4 from Parabacteroides distasonis (strain ATCC 8503 / DSM 20701 / CIP 104284 / JCM 5825 / NCTC 11152).